We begin with the raw amino-acid sequence, 290 residues long: uncharacterized protein (290 aa).

Helical transmembrane passes span 40–60 (MHVI…SPVI), 80–100 (DAHV…YTCL), 110–130 (LFGY…YFVW), 139–159 (VHIT…VITF), 166–188 (MYYG…HYFL), 200–220 (MING…WGWF), and 238–260 (WALS…FWVS). One can recognise a TLC domain in the interval 74-271 (KTRLNWDAHV…MIDAIRRRAH (198 aa)).

The protein resides in the endoplasmic reticulum membrane. This is an uncharacterized protein from Schizosaccharomyces pombe (strain 972 / ATCC 24843) (Fission yeast).